A 339-amino-acid polypeptide reads, in one-letter code: Cullin-associated NEDD8-dissociated protein 1, N-terminal part (339 aa).

HEAT repeat units follow at residues 5-42 (HTIQQNLNGLLSKLNDPDPDMRYMSLNDLYGILSNPCS) and 50-87 (ASATRLAEGLLKALDDQHGDVQNQALKCLGPLVARLPL).

In terms of assembly, interacts with candA-C. Interacts with unneddylated cullins culA and culD; interaction occurs only when complexed with candA-C.

It is found in the nucleus. Assembly factor of SCF (SKP1-CUL1-F-box protein) E3 ubiquitin ligase complexes that promotes the exchange of the substrate-recognition F-box subunit in SCF complexes, thereby playing a key role in the cellular repertoire of SCF complexes. Acts as a F-box protein exchange factor when interacting with candA-C. The chain is Cullin-associated NEDD8-dissociated protein 1, N-terminal part (candA-N) from Emericella nidulans (strain FGSC A4 / ATCC 38163 / CBS 112.46 / NRRL 194 / M139) (Aspergillus nidulans).